The following is a 578-amino-acid chain: Isocitrate dehydrogenase kinase/phosphatase (578 aa).

Residues 315–321 (APGIRGM) and K336 each bind ATP. Residue D371 is part of the active site.

This sequence belongs to the AceK family.

The protein localises to the cytoplasm. The catalysed reaction is L-seryl-[isocitrate dehydrogenase] + ATP = O-phospho-L-seryl-[isocitrate dehydrogenase] + ADP + H(+). In terms of biological role, bifunctional enzyme which can phosphorylate or dephosphorylate isocitrate dehydrogenase (IDH) on a specific serine residue. This is a regulatory mechanism which enables bacteria to bypass the Krebs cycle via the glyoxylate shunt in response to the source of carbon. When bacteria are grown on glucose, IDH is fully active and unphosphorylated, but when grown on acetate or ethanol, the activity of IDH declines drastically concomitant with its phosphorylation. This is Isocitrate dehydrogenase kinase/phosphatase from Escherichia coli (strain ATCC 8739 / DSM 1576 / NBRC 3972 / NCIMB 8545 / WDCM 00012 / Crooks).